Reading from the N-terminus, the 172-residue chain is C-phycocyanin-2 beta subunit (172 aa).

Position 72 is an N4-methylasparagine (N72). (2R,3E)-phycocyanobilin contacts are provided by C82 and C153.

Belongs to the phycobiliprotein family. Heterodimer of an alpha and a beta subunit, which further assembles into trimers and the trimers into hexamers. Post-translationally, contains two covalently linked bilin chromophores.

It is found in the cellular thylakoid membrane. Light-harvesting photosynthetic bile pigment-protein from the phycobiliprotein complex (phycobilisome, PBS). Phycocyanin is the major phycobiliprotein in the PBS rod. In Microchaete diplosiphon (Fremyella diplosiphon), this protein is C-phycocyanin-2 beta subunit (cpcB2).